Consider the following 344-residue polypeptide: Exopolyphosphatase 1 (344 aa).

Residues 319-344 (VHTSVRAVGGQPADRNAANRSRGSKP) form a disordered region.

Belongs to the GppA/Ppx family. Homodimer.

It carries out the reaction [phosphate](n) + H2O = [phosphate](n-1) + phosphate + H(+). Degradation of inorganic polyphosphates (polyP). Releases orthophosphate processively from the ends of the polyP chain. The sequence is that of Exopolyphosphatase 1 from Mycobacterium bovis (strain ATCC BAA-935 / AF2122/97).